The sequence spans 342 residues: tRNA dimethylallyltransferase (342 aa).

Residues 1 to 13 (MNDTTAKTLNCSP) show a composition bias toward polar residues. The disordered stretch occupies residues 1–21 (MNDTTAKTLNCSPASRDGFPE). 40-47 (GPTGVGKT) is a binding site for ATP. 42–47 (TGVGKT) is a substrate binding site. Interaction with substrate tRNA regions lie at residues 65-68 (DSMQ) and 189-193 (QRILR).

Belongs to the IPP transferase family. Monomer. Mg(2+) serves as cofactor.

The catalysed reaction is adenosine(37) in tRNA + dimethylallyl diphosphate = N(6)-dimethylallyladenosine(37) in tRNA + diphosphate. Catalyzes the transfer of a dimethylallyl group onto the adenine at position 37 in tRNAs that read codons beginning with uridine, leading to the formation of N6-(dimethylallyl)adenosine (i(6)A). In Syntrophobacter fumaroxidans (strain DSM 10017 / MPOB), this protein is tRNA dimethylallyltransferase.